We begin with the raw amino-acid sequence, 503 residues long: Na(+)-translocating NADH-quinone reductase subunit B (503 aa).

5 helical membrane-spanning segments follow: residues 55–75, 94–114, 120–140, 161–181, and 186–206; these read MMLV…NSGL, ISGF…VPIL, IFIP…VLFA, TLPP…GIVV, and FGGT…FLFF. Position 248 is an FMN phosphoryl threonine (Thr-248). Helical transmembrane passes span 361-381, 386-406, 417-437, 452-472, and 475-495; these read TSTF…IASW, AFGI…VLIV, FFIP…LVFM, WIYG…NPAY, and GVML…YFAV.

This sequence belongs to the NqrB/RnfD family. As to quaternary structure, composed of six subunits; NqrA, NqrB, NqrC, NqrD, NqrE and NqrF. FMN serves as cofactor.

Its subcellular location is the cell inner membrane. It catalyses the reaction a ubiquinone + n Na(+)(in) + NADH + H(+) = a ubiquinol + n Na(+)(out) + NAD(+). In terms of biological role, NQR complex catalyzes the reduction of ubiquinone-1 to ubiquinol by two successive reactions, coupled with the transport of Na(+) ions from the cytoplasm to the periplasm. NqrA to NqrE are probably involved in the second step, the conversion of ubisemiquinone to ubiquinol. The protein is Na(+)-translocating NADH-quinone reductase subunit B of Chlamydia pneumoniae (Chlamydophila pneumoniae).